Consider the following 115-residue polypeptide: Phosphoribosyl-AMP cyclohydrolase (115 aa).

Asp80 serves as a coordination point for Mg(2+). Residue Cys81 participates in Zn(2+) binding. The Mg(2+) site is built by Asp82 and Asp84. 2 residues coordinate Zn(2+): Cys97 and Cys104.

This sequence belongs to the PRA-CH family. In terms of assembly, homodimer. Mg(2+) serves as cofactor. The cofactor is Zn(2+).

It is found in the cytoplasm. It catalyses the reaction 1-(5-phospho-beta-D-ribosyl)-5'-AMP + H2O = 1-(5-phospho-beta-D-ribosyl)-5-[(5-phospho-beta-D-ribosylamino)methylideneamino]imidazole-4-carboxamide. Its pathway is amino-acid biosynthesis; L-histidine biosynthesis; L-histidine from 5-phospho-alpha-D-ribose 1-diphosphate: step 3/9. In terms of biological role, catalyzes the hydrolysis of the adenine ring of phosphoribosyl-AMP. In Nocardia farcinica (strain IFM 10152), this protein is Phosphoribosyl-AMP cyclohydrolase.